The sequence spans 369 residues: Flagellar P-ring protein (369 aa).

The first 22 residues, 1 to 22, serve as a signal peptide directing secretion; that stretch reads MIKLKQLIAATLLLSTAFGVHA.

The protein belongs to the FlgI family. In terms of assembly, the basal body constitutes a major portion of the flagellar organelle and consists of four rings (L,P,S, and M) mounted on a central rod.

It localises to the periplasm. The protein localises to the bacterial flagellum basal body. Assembles around the rod to form the L-ring and probably protects the motor/basal body from shearing forces during rotation. The chain is Flagellar P-ring protein from Pseudomonas savastanoi pv. phaseolicola (strain 1448A / Race 6) (Pseudomonas syringae pv. phaseolicola (strain 1448A / Race 6)).